The following is a 20-amino-acid chain: KVPVDDQFRRVNNGGATDTR.

Positions 1 to 20 (KVPVDDQFRRVNNGGATDTR) are disordered.

It localises to the secreted. The protein localises to the cell wall. The protein is 54 kDa cell wall protein of Arabidopsis thaliana (Mouse-ear cress).